A 421-amino-acid polypeptide reads, in one-letter code: MDMFSLGQGNNTTTSLEPFGTGGNDTGLSNVTFSYQVITSLLLGTLIFCAVLGNACVVAAIALERSLQNVANYLIGSLAVTDLMVSVLVLPMAALYQVLNKWTLGQVTCDLFIALDVLCCTSSILHLCAIALDRYWAITDPIDYVNKRTPRRAAALISLTWLIGFLISIPPMLGWRTPEDRSNPNECTISKDHGYTIYSTFGAFYIPLLLMLVLYGRIFRAARFRIRKTVKKVEKKGAGTSFGTSSAPPPKKSLNGQPGSGDCRRSAENRAVGTPCANGAVRQGEDDATLEVIEVHRVGNSKGHLPLPSESGATSYVPACLERKNERTAEAKRKMALARERKTVKTLGIIMGTFILCWLPFFIVALVLPFCESSCHMPELLGAIINWLGYSNSLLNPVIYAYFNKDFQNAFKKIIKCKFCR.

The Extracellular portion of the chain corresponds to 1–38 (MDMFSLGQGNNTTTSLEPFGTGGNDTGLSNVTFSYQVI). N-linked (GlcNAc...) asparagine glycosylation is found at Asn10, Asn11, Asn24, and Asn30. The helical transmembrane segment at 39-59 (TSLLLGTLIFCAVLGNACVVA) threads the bilayer. Over 60-73 (AIALERSLQNVANY) the chain is Cytoplasmic. The helical transmembrane segment at 74–98 (LIGSLAVTDLMVSVLVLPMAALYQV) threads the bilayer. Residues 99 to 107 (LNKWTLGQV) lie on the Extracellular side of the membrane. Residues 108 to 132 (TCDLFIALDVLCCTSSILHLCAIAL) form a helical membrane-spanning segment. A disulfide bridge connects residues Cys109 and Cys187. Serotonin contacts are provided by Asp116 and Cys120. The DRY motif; important for ligand-induced conformation changes signature appears at 133-135 (DRY). Residues 133–152 (DRYWAITDPIDYVNKRTPRR) lie on the Cytoplasmic side of the membrane. Residues 153-174 (AAALISLTWLIGFLISIPPMLG) traverse the membrane as a helical segment. At 175–193 (WRTPEDRSNPNECTISKDH) the chain is on the extracellular side. The helical transmembrane segment at 194–216 (GYTIYSTFGAFYIPLLLMLVLYG) threads the bilayer. At 217–346 (RIFRAARFRI…LARERKTVKT (130 aa)) the chain is on the cytoplasmic side. Residues 237 to 268 (GAGTSFGTSSAPPPKKSLNGQPGSGDCRRSAE) are disordered. 4 residues coordinate 1D-myo-inositol 4-phosphate: Thr314, Lys345, Thr346, and Gly352. The helical transmembrane segment at 347 to 370 (LGIIMGTFILCWLPFFIVALVLPF) threads the bilayer. Topologically, residues 371-378 (CESSCHMP) are extracellular. A helical transmembrane segment spans residues 379–403 (ELLGAIINWLGYSNSLLNPVIYAYF). The short motif at 396–400 (NPVIY) is the NPxxY motif; important for ligand-induced conformation changes and signaling element. Positions 403, 404, and 405 each coordinate 1D-myo-inositol 4-phosphate. At 404 to 421 (NKDFQNAFKKIIKCKFCR) the chain is on the cytoplasmic side.

This sequence belongs to the G-protein coupled receptor 1 family. 5-hydroxytryptamine receptor subfamily. HTR1A sub-subfamily. Heterodimer; heterodimerizes with GPER1. Interacts with YIF1B. Interacts with GPR39 and GALR1. In terms of tissue distribution, most abundantly expressed in midbrain, in dorsal raphe and hippocampus. Detected at lower levels in amygdala and brain cortex.

The protein localises to the cell membrane. The protein resides in the cell projection. Its subcellular location is the dendrite. Its activity is regulated as follows. G-protein coupled receptor activity is regulated by lipids: phosphatidylinositol 4-phosphate increases HTR1A-mediated activity. Plays a role in the regulation of dopamine and 5-hydroxytryptamine levels in the brain, and thereby affects neural activity, mood and behavior. Plays a role in the response to anxiogenic stimuli. In terms of biological role, G-protein coupled receptor for 5-hydroxytryptamine (serotonin). Also functions as a receptor for various drugs and psychoactive substances. Ligand binding causes a conformation change that triggers signaling via guanine nucleotide-binding proteins (G proteins) and modulates the activity of downstream effectors, such as adenylate cyclase. HTR1A is coupled to G(i)/G(o) G alpha proteins and mediates inhibitory neurotransmission: signaling inhibits adenylate cyclase activity and activates a phosphatidylinositol-calcium second messenger system that regulates the release of Ca(2+) ions from intracellular stores. Beta-arrestin family members regulate signaling by mediating both receptor desensitization and resensitization processes. This is 5-hydroxytryptamine receptor 1A (Htr1a) from Mus musculus (Mouse).